A 347-amino-acid polypeptide reads, in one-letter code: NADH-ubiquinone oxidoreductase chain 2 (347 aa).

The next 10 membrane-spanning stretches (helical) occupy residues Pro-3 to Ser-23, His-25 to Met-45, Ala-66 to Ile-86, Ile-93 to Val-115, Ile-149 to Gly-169, Ile-178 to Pro-198, Met-201 to Leu-221, Phe-237 to Leu-257, Asn-274 to Leu-294, and Leu-325 to Val-345.

Belongs to the complex I subunit 2 family. Core subunit of respiratory chain NADH dehydrogenase (Complex I) which is composed of 45 different subunits. Interacts with TMEM242.

It is found in the mitochondrion inner membrane. The catalysed reaction is a ubiquinone + NADH + 5 H(+)(in) = a ubiquinol + NAD(+) + 4 H(+)(out). In terms of biological role, core subunit of the mitochondrial membrane respiratory chain NADH dehydrogenase (Complex I) which catalyzes electron transfer from NADH through the respiratory chain, using ubiquinone as an electron acceptor. Essential for the catalytic activity and assembly of complex I. In Canis lupus (Gray wolf), this protein is NADH-ubiquinone oxidoreductase chain 2.